A 77-amino-acid polypeptide reads, in one-letter code: DNA-directed RNA polymerase subunit epsilon (77 aa).

The protein belongs to the RNA polymerase subunit epsilon family. As to quaternary structure, RNAP is composed of a core of 2 alpha, a beta and a beta' subunit. The core is associated with a delta subunit, and at least one of epsilon or omega. When a sigma factor is associated with the core the holoenzyme is formed, which can initiate transcription.

The catalysed reaction is RNA(n) + a ribonucleoside 5'-triphosphate = RNA(n+1) + diphosphate. Its function is as follows. A non-essential component of RNA polymerase (RNAP). This is DNA-directed RNA polymerase subunit epsilon from Streptococcus pneumoniae serotype 2 (strain D39 / NCTC 7466).